A 226-amino-acid polypeptide reads, in one-letter code: GTP-binding nuclear protein Ran-3 (226 aa).

A Small GTPase Ran-type domain is found at 14–178; the sequence is GYPSFKLILV…LYLARKLTGD (165 aa). 25-32 lines the GTP pocket; that stretch reads DGGTGKTT. Positions 44–52 are switch-I; the sequence is KRYEPTIGV. Residues Gly-75, 129-132, and 157-159 contribute to the GTP site; these read NKVD and SAK. The switch-II stretch occupies residues 75–91; sequence GQEKFGGLRDGYYIHGH.

This sequence belongs to the small GTPase superfamily. Ran family. Found in a nuclear export complex with RanGTP, exportin and pre-miRNA.

It is found in the nucleus. In terms of biological role, GTP-binding protein involved in nucleocytoplasmic transport. Required for the import of protein into the nucleus and also for RNA export. Involved in chromatin condensation and control of cell cycle. This Oryza sativa subsp. indica (Rice) protein is GTP-binding nuclear protein Ran-3 (RAN3).